A 226-amino-acid chain; its full sequence is Late protein I226R (226 aa).

A signal peptide spans 1–16 (MKMETFLVCLFHNAKG). Residue asparagine 164 is glycosylated (N-linked (GlcNAc...) asparagine; by host).

It belongs to the asfivirus I226R family.

In terms of biological role, plays a role in the inhibition of host NF-kappa-B and IRF3 signaling pathways. Mechanistically, promotes the degradation of host IKBKG through enhancing its ubiquitination leading to inhibition of both pathways. The sequence is that of Late protein I226R from Ornithodoros (relapsing fever ticks).